We begin with the raw amino-acid sequence, 290 residues long: Potassium-transporting ATPase subunit beta (290 aa).

The Cytoplasmic portion of the chain corresponds to 1-36 (MAALQEKKSCSQRMEEFQRYCWNPDTGQMLGRTLSR). A helical; Signal-anchor for type II membrane protein transmembrane segment spans residues 37–57 (WVWISLYYVAFYVVMTGIFAL). The Extracellular portion of the chain corresponds to 58 to 290 (CIYTLMCTLD…KVEFKLTIQQ (233 aa)). Residues asparagine 99, asparagine 103, asparagine 130, asparagine 146, and asparagine 161 are each glycosylated (N-linked (GlcNAc...) asparagine). Cysteine 131 and cysteine 152 are oxidised to a cystine. A disulfide bridge links cysteine 162 with cysteine 178. Residues asparagine 193 and asparagine 221 are each glycosylated (N-linked (GlcNAc...) asparagine). Positions 194–290 (STAPRADCTF…KVEFKLTIQQ (97 aa)) are immunoglobulin-like. A disulfide bond links cysteine 201 and cysteine 262.

Belongs to the X(+)/potassium ATPases subunit beta family. As to quaternary structure, the ATPase pump is composed of two subunits: alpha (catalytic) and beta (regulatory). Interacts with alpha subunit ATP12A; this interaction is required for the formation of a functionally active pump and targeting at the plasma membrane. Interacts (via N-terminus) with alpha subunit ATP4A (via the P-domain). In terms of processing, N-glycosylation is necessary for assembly and functional expression of the pump at the plasma membrane.

It is found in the apical cell membrane. The protein resides in the cell membrane. In terms of biological role, the beta subunit of the gastric H(+)/K(+) ATPase pump which transports H(+) ions in exchange for K(+) ions across the apical membrane of parietal cells. Plays a structural and regulatory role in the assembly and membrane targeting of a functionally active pump. Within a transport cycle, the transfer of a H(+) ion across the membrane is coupled to ATP hydrolysis and is associated with a transient phosphorylation of the alpha subunit that shifts the pump conformation from inward-facing (E1) to outward-facing state (E2). Interacts with the phosphorylation domain of the alpha subunit and functions as a ratchet, stabilizing the lumenal-open E2 conformation and preventing the reverse reaction of the transport cycle. This Canis lupus familiaris (Dog) protein is Potassium-transporting ATPase subunit beta (ATP4B).